The primary structure comprises 93 residues: MTKSELIERIVTQQGLLSSKDVELAIKTMLEQMAQALATGERIEIRGFGSFSLHYRAPRVGRNPKTGQSVSLDGKFVPHFKPGKELRDRVNDD.

A disordered region spans residues 59-93 (RVGRNPKTGQSVSLDGKFVPHFKPGKELRDRVNDD). Over residues 82 to 93 (PGKELRDRVNDD) the composition is skewed to basic and acidic residues.

This sequence belongs to the bacterial histone-like protein family. In terms of assembly, heterodimer of an alpha and a beta chain.

This protein is one of the two subunits of integration host factor, a specific DNA-binding protein that functions in genetic recombination as well as in transcriptional and translational control. In Stutzerimonas stutzeri (strain A1501) (Pseudomonas stutzeri), this protein is Integration host factor subunit beta.